A 610-amino-acid chain; its full sequence is Probable methyltransferase PMT22 (610 aa).

Topologically, residues 1–10 (MIKNIFQSRK) are cytoplasmic. A helical; Signal-anchor for type II membrane protein transmembrane segment spans residues 11–31 (LSGLCVLSILLVSVTILLLTN). Residues 32–610 (DTIDLFPYLS…LVGLKSSWRP (579 aa)) are Lumenal-facing. The segment covering 56–69 (STPISSPTNDSSPP) has biased composition (low complexity). A disordered region spans residues 56-81 (STPISSPTNDSSPPLESPVNQTRVDD). Residues Asn64, Asn75, Asn100, Asn400, Asn469, and Asn546 are each glycosylated (N-linked (GlcNAc...) asparagine).

This sequence belongs to the methyltransferase superfamily.

The protein resides in the endoplasmic reticulum membrane. The sequence is that of Probable methyltransferase PMT22 from Arabidopsis thaliana (Mouse-ear cress).